We begin with the raw amino-acid sequence, 480 residues long: Glutamate--tRNA ligase (480 aa).

Positions 21–31 (PSPTGYLHVGG) match the 'HIGH' region motif. Zn(2+) contacts are provided by cysteine 110, cysteine 112, cysteine 137, and histidine 139. Residues 248 to 252 (KLSKR) carry the 'KMSKS' region motif. Residue lysine 251 coordinates ATP.

Belongs to the class-I aminoacyl-tRNA synthetase family. Glutamate--tRNA ligase type 1 subfamily. In terms of assembly, monomer. It depends on Zn(2+) as a cofactor.

It localises to the cytoplasm. The catalysed reaction is tRNA(Glu) + L-glutamate + ATP = L-glutamyl-tRNA(Glu) + AMP + diphosphate. Catalyzes the attachment of glutamate to tRNA(Glu) in a two-step reaction: glutamate is first activated by ATP to form Glu-AMP and then transferred to the acceptor end of tRNA(Glu). This chain is Glutamate--tRNA ligase, found in Haemophilus influenzae (strain 86-028NP).